A 621-amino-acid chain; its full sequence is Chaperone protein HtpG (621 aa).

The segment at 1–328 (MIQEKKKFDA…SEDLPLNISR (328 aa)) is a; substrate-binding. The b stretch occupies residues 329–544 (ESLQHNSVLE…DAAMDIRMER (216 aa)). Positions 475 to 494 (SDIDVEQTTSQSEAKNTDSK) are disordered. Residues 545-621 (FLIEQKQIAN…LNDIVQKAIL (77 aa)) form a c region.

This sequence belongs to the heat shock protein 90 family. In terms of assembly, homodimer.

It is found in the cytoplasm. Its function is as follows. Molecular chaperone. Has ATPase activity. The protein is Chaperone protein HtpG of Rickettsia rickettsii (strain Iowa).